Reading from the N-terminus, the 189-residue chain is MRKIGIIGGTFDPPHYGHLLIANEVYHALNLEEVWFLPNQIPPHKQGRNITSVESRLQMLELATEAEEHFSICLEELSRKGPSYTYDTMLQLTKKYPDVQFHFIIGGDMVEYLPKWYNIEALLDLVTFVGVARPGYTLHTPYPITTVEIPEFAVSSSLLRERYKEKKTCKYLLPEKVQVYIERNGLYES.

Belongs to the NadD family.

The enzyme catalyses nicotinate beta-D-ribonucleotide + ATP + H(+) = deamido-NAD(+) + diphosphate. It functions in the pathway cofactor biosynthesis; NAD(+) biosynthesis; deamido-NAD(+) from nicotinate D-ribonucleotide: step 1/1. In terms of biological role, catalyzes the reversible adenylation of nicotinate mononucleotide (NaMN) to nicotinic acid adenine dinucleotide (NaAD). This is Probable nicotinate-nucleotide adenylyltransferase from Bacillus cereus (strain AH820).